A 904-amino-acid polypeptide reads, in one-letter code: Shieldin complex subunit 2 (904 aa).

Positions 1–60 are sufficient for interaction with SHLD3 and MAD2L2; sequence MSGGSQVHIFWGAPVAPLKMTVSQDTASLMSVADPWKKIHLLYSQHSLYLKDEKQHKNLE. The segment at 1-568 is interaction with ASTE1; the sequence is MSGGSQVHIF…AYVSSKHSYL (568 aa). The tract at residues 721–891 is mediates interaction with SHLD1; it reads KCSGVVLIQA…LQQDFSLLDF (171 aa).

This sequence belongs to the SHLD2 family. As to quaternary structure, component of the shieldin complex, consisting of SHLD1, SHLD2, SHLD3 and MAD2L2/REV7. Within the complex, SHLD2 forms a scaffold which interacts with a SHLD3-MAD2L2 subcomplex via its N-terminus, and with SHLD1 via its C-terminus. Interacts with TP53BP1. Interacts with RIF1. Interacts with ASTE1.

It localises to the chromosome. Functionally, component of the shieldin complex, which plays an important role in repair of DNA double-stranded breaks (DSBs). During G1 and S phase of the cell cycle, the complex functions downstream of TP53BP1 to promote non-homologous end joining (NHEJ) and suppress DNA end resection. Mediates various NHEJ-dependent processes including immunoglobulin class-switch recombination, and fusion of unprotected telomeres. The polypeptide is Shieldin complex subunit 2 (Pongo abelii (Sumatran orangutan)).